A 339-amino-acid polypeptide reads, in one-letter code: Diacylglycerol acyltransferase/mycolyltransferase Ag85A (339 aa).

The N-terminal stretch at 1–43 (MKLVDRFRGAVTGMPRRLMVGAVGAALLSGLVGFVGGSATASA) is a signal peptide. 85–86 (MR) provides a ligand contact to substrate. The fibronectin-binding stretch occupies residues 101–111 (FEWYNQSGISV). Cysteine 130 and cysteine 135 form a disulfide bridge. Serine 169 and aspartate 197 together coordinate substrate. Serine 169 acts as the Nucleophile in catalysis. Glutamate 272 is a catalytic residue. Substrate is bound by residues 274–277 (FVRT), lysine 281, and 304–306 (HDW). Histidine 304 is a catalytic residue.

It belongs to the mycobacterial A85 antigen family. Homodimer.

It is found in the secreted. The protein resides in the cell wall. It localises to the cytoplasm. The enzyme catalyses an acyl-CoA + a 1,2-diacyl-sn-glycerol = a triacyl-sn-glycerol + CoA. The catalysed reaction is 2 alpha,alpha'-trehalose 6-mycolate = alpha,alpha'-trehalose 6,6'-bismycolate + alpha,alpha-trehalose. The antigen 85 proteins (FbpA, FbpB, FbpC) are responsible for the high affinity of mycobacteria for fibronectin, a large adhesive glycoprotein, which facilitates the attachment of M.tuberculosis to murine alveolar macrophages (AMs). They also help to maintain the integrity of the cell wall by catalyzing the transfer of mycolic acids to cell wall arabinogalactan, and through the synthesis of alpha,alpha-trehalose dimycolate (TDM, cord factor). They catalyze the transfer of a mycoloyl residue from one molecule of alpha,alpha-trehalose monomycolate (TMM) to another TMM, leading to the formation of TDM. FbpA mediates triacylglycerol (TAG) formation with long-chain acyl-CoA as the acyl donor and 1,2-dipalmitoyl-sn-glycerol (1,2-dipalmitin) as the acyl acceptor. It has a preference for C26:0-CoA over C18:1-CoA. This chain is Diacylglycerol acyltransferase/mycolyltransferase Ag85A (fbpA), found in Mycobacterium gordonae.